A 514-amino-acid polypeptide reads, in one-letter code: Maturase K (514 aa).

It belongs to the intron maturase 2 family. MatK subfamily.

It is found in the plastid. The protein resides in the chloroplast. Usually encoded in the trnK tRNA gene intron. Probably assists in splicing its own and other chloroplast group II introns. The polypeptide is Maturase K (Lepidozamia peroffskyana (Peroffsky's lepidozamia)).